The sequence spans 336 residues: tRNA-dihydrouridine(20/20a) synthase (336 aa).

FMN-binding positions include 24 to 26 (PMM) and glutamine 77. The active-site Proton donor is cysteine 107. Residues lysine 146, histidine 178, 218–220 (NGG), and 240–241 (GR) contribute to the FMN site.

This sequence belongs to the Dus family. DusA subfamily. FMN is required as a cofactor.

It catalyses the reaction 5,6-dihydrouridine(20) in tRNA + NADP(+) = uridine(20) in tRNA + NADPH + H(+). The catalysed reaction is 5,6-dihydrouridine(20) in tRNA + NAD(+) = uridine(20) in tRNA + NADH + H(+). The enzyme catalyses 5,6-dihydrouridine(20a) in tRNA + NADP(+) = uridine(20a) in tRNA + NADPH + H(+). It carries out the reaction 5,6-dihydrouridine(20a) in tRNA + NAD(+) = uridine(20a) in tRNA + NADH + H(+). Its function is as follows. Catalyzes the synthesis of 5,6-dihydrouridine (D), a modified base found in the D-loop of most tRNAs, via the reduction of the C5-C6 double bond in target uridines. Specifically modifies U20 and U20a in tRNAs. This Pseudomonas syringae pv. tomato (strain ATCC BAA-871 / DC3000) protein is tRNA-dihydrouridine(20/20a) synthase.